A 535-amino-acid polypeptide reads, in one-letter code: Putative cysteine ligase BshC (535 aa).

Positions 420 to 477 (DTFKALKESINSAYKNLQEKLAPLGADFQKLTGENLGRVMAQVKYLEERAQKYHREKN) form a coiled coil.

This sequence belongs to the BshC family.

Functionally, involved in bacillithiol (BSH) biosynthesis. May catalyze the last step of the pathway, the addition of cysteine to glucosamine malate (GlcN-Mal) to generate BSH. In Carboxydothermus hydrogenoformans (strain ATCC BAA-161 / DSM 6008 / Z-2901), this protein is Putative cysteine ligase BshC.